The following is a 590-amino-acid chain: L-fucose isomerase (590 aa).

Active-site proton acceptor residues include glutamate 337 and aspartate 361. The Mn(2+) site is built by glutamate 337, aspartate 361, and histidine 528.

This sequence belongs to the L-fucose isomerase family. Requires Mn(2+) as cofactor.

Its subcellular location is the cytoplasm. It carries out the reaction L-fucose = L-fuculose. The protein operates within carbohydrate degradation; L-fucose degradation; L-lactaldehyde and glycerone phosphate from L-fucose: step 1/3. Functionally, converts the aldose L-fucose into the corresponding ketose L-fuculose. This is L-fucose isomerase from Bacteroides fragilis (strain ATCC 25285 / DSM 2151 / CCUG 4856 / JCM 11019 / LMG 10263 / NCTC 9343 / Onslow / VPI 2553 / EN-2).